The following is a 254-amino-acid chain: 5'-nucleotidase SurE (254 aa).

4 residues coordinate a divalent metal cation: D8, D9, S40, and N93.

The protein belongs to the SurE nucleotidase family. A divalent metal cation is required as a cofactor.

It localises to the cytoplasm. The enzyme catalyses a ribonucleoside 5'-phosphate + H2O = a ribonucleoside + phosphate. Its function is as follows. Nucleotidase that shows phosphatase activity on nucleoside 5'-monophosphates. The chain is 5'-nucleotidase SurE from Actinobacillus pleuropneumoniae serotype 5b (strain L20).